We begin with the raw amino-acid sequence, 144 residues long: Large ribosomal subunit protein uL15 (144 aa).

Residues 1-49 (MRLNTLSPAAGAKSAAKRVGRGIGSGTGKTCGRGHKGQKSRSGGGVRVG) are disordered. Gly residues predominate over residues 21–31 (RGIGSGTGKTC).

The protein belongs to the universal ribosomal protein uL15 family. In terms of assembly, part of the 50S ribosomal subunit.

In terms of biological role, binds to the 23S rRNA. This chain is Large ribosomal subunit protein uL15, found in Shewanella halifaxensis (strain HAW-EB4).